Here is a 276-residue protein sequence, read N- to C-terminus: Octanoyltransferase LipM (276 aa).

One can recognise a BPL/LPL catalytic domain in the interval 31–246 (GLIPPVIRFY…GFAKSLQIEL (216 aa)). The active-site Acyl-thioester intermediate is Cys148.

This sequence belongs to the octanoyltransferase LipM family. In terms of assembly, monomer.

It carries out the reaction octanoyl-[ACP] + L-lysyl-[protein] = N(6)-octanoyl-L-lysyl-[protein] + holo-[ACP] + H(+). It participates in protein modification; protein lipoylation via endogenous pathway; protein N(6)-(lipoyl)lysine from octanoyl-[acyl-carrier-protein]. Functionally, catalyzes the transfer of endogenously produced octanoic acid from octanoyl-acyl-carrier-protein onto the lipoyl domain of GcvH, an intermediate carrier during protein lipoylation. The chain is Octanoyltransferase LipM from Lysinibacillus sphaericus (strain C3-41).